A 146-amino-acid polypeptide reads, in one-letter code: Transcriptional regulator MraZ (146 aa).

2 consecutive SpoVT-AbrB domains span residues 7–54 (HVTN…GPEL) and 83–126 (GVYV…DPQA).

Belongs to the MraZ family. Forms oligomers.

Its subcellular location is the cytoplasm. The protein resides in the nucleoid. The sequence is that of Transcriptional regulator MraZ from Rhizobium meliloti (strain 1021) (Ensifer meliloti).